Here is a 772-residue protein sequence, read N- to C-terminus: MHPGGQAILFATDLDESSSVNAQLCELRKDGTMVDDSTQGGELEASEAGAEARHHWTELAQRILDAQDAYYARDAPTISDAEYDRLMVELKKVEDDHPELRTPDSPTQRVGAPQRITDFAPVKHLERLLSLDNVFTRDELSEWMNRVATAVGKIPNFLCELKIDGLAVDLVYRDGQLVSGATRGDGRIGEDVTANVRTIAAIPRKLTGDDVPRLLEVRGEVFFPVADFTDLNAALIEAGKNPFANPRNAAAGSLRQKDSRVTASRPLSMIVHGIGVLEGHDFPSQGHAYDKLAQWGLPVSPYFKIVEHVDEVHEFVTRWGESRDEASHQIDGVVVKVDDVSLQRKLGATSRAPRWAIAYKYPPEEVNTELLDIRVNVGRTGRVTPYGVMRPVTVAGSTVEMATLHNAFEVKRKGVLIGDTVVLRKAGDVIPEILGPVVELRNGTEREFLMPDHCPSCGAELAYEKNGDKDLRCPNAQGCPSQLHERVFGLASRGALDIEALGWEAAIALTDPENQRPGDDEVAEELPKRQTAVLSSEAGLFDLQLDDLAEIKVWRRRKVNGGPGPWQLEPYFFTKATAKKPSTPTATTKKMFDELAKAKSQPLWRVLVALSIRHVGPTAARALATHFGSVEAIREASVEELAGVDGVGEIIAESVKRWFEVDWHQEIISRWAAAGVRMADDRDEAPEQTLEGLTVVVTGSLEGFSRDEAKEAIVSRGGKAAGSVSRKTDYVVVGENAGSKETKARDLGRPILDEAGFRYLLENGPQGITTIG.

NAD(+)-binding positions include 80–84 (DAEYD), 130–131 (SL), and glutamate 160. Residue lysine 162 is the N6-AMP-lysine intermediate of the active site. NAD(+) is bound by residues arginine 183, glutamate 220, lysine 336, and lysine 360. The Zn(2+) site is built by cysteine 454, cysteine 457, cysteine 473, and cysteine 479. The 88-residue stretch at 685–772 (APEQTLEGLT…NGPQGITTIG (88 aa)) folds into the BRCT domain.

Belongs to the NAD-dependent DNA ligase family. LigA subfamily. The cofactor is Mg(2+). Requires Mn(2+) as cofactor.

It catalyses the reaction NAD(+) + (deoxyribonucleotide)n-3'-hydroxyl + 5'-phospho-(deoxyribonucleotide)m = (deoxyribonucleotide)n+m + AMP + beta-nicotinamide D-nucleotide.. Its function is as follows. DNA ligase that catalyzes the formation of phosphodiester linkages between 5'-phosphoryl and 3'-hydroxyl groups in double-stranded DNA using NAD as a coenzyme and as the energy source for the reaction. It is essential for DNA replication and repair of damaged DNA. The sequence is that of DNA ligase from Cutibacterium acnes (strain DSM 16379 / KPA171202) (Propionibacterium acnes).